The following is a 108-amino-acid chain: Acid stress chaperone HdeB (108 aa).

An N-terminal signal peptide occupies residues 1–29 (MNISSLRKAFIFMGAVAALSLVNAQSALA). Position 93 is an N6-acetyllysine (lysine 93).

This sequence belongs to the HdeB family.

Its subcellular location is the periplasm. Its function is as follows. Required for optimal acid stress protection, which is important for survival of enteric bacteria in the acidic environment of the host stomach. Exhibits a chaperone-like activity at acidic pH by preventing the aggregation of many different periplasmic proteins. The sequence is that of Acid stress chaperone HdeB from Escherichia coli O6:H1 (strain CFT073 / ATCC 700928 / UPEC).